The primary structure comprises 400 residues: 8-amino-7-oxononanoate synthase (400 aa).

R21 provides a ligand contact to substrate. Residue 112–113 (GY) participates in pyridoxal 5'-phosphate binding. H137 contacts substrate. Pyridoxal 5'-phosphate is bound by residues S183, H211, and T239. K242 bears the N6-(pyridoxal phosphate)lysine mark. T358 is a substrate binding site.

Belongs to the class-II pyridoxal-phosphate-dependent aminotransferase family. BioF subfamily. In terms of assembly, homodimer. Pyridoxal 5'-phosphate serves as cofactor.

The enzyme catalyses 6-carboxyhexanoyl-[ACP] + L-alanine + H(+) = (8S)-8-amino-7-oxononanoate + holo-[ACP] + CO2. It participates in cofactor biosynthesis; biotin biosynthesis. Functionally, catalyzes the decarboxylative condensation of pimeloyl-[acyl-carrier protein] and L-alanine to produce 8-amino-7-oxononanoate (AON), [acyl-carrier protein], and carbon dioxide. The chain is 8-amino-7-oxononanoate synthase from Burkholderia lata (strain ATCC 17760 / DSM 23089 / LMG 22485 / NCIMB 9086 / R18194 / 383).